Reading from the N-terminus, the 752-residue chain is Multifunctional tryptophan biosynthesis protein (752 aa).

Residues 23 to 223 (NVILIDNYDS…LELTAGTWDN (201 aa)) enclose the Glutamine amidotransferase type-1 domain. 74–76 (GPG) lines the L-glutamine pocket. Residue C102 is the Nucleophile; for GATase activity of the active site. L-glutamine is bound by residues Q106 and 152 to 153 (SL). Active-site for GATase activity residues include H197 and E199. An indole-3-glycerol phosphate synthase region spans residues 239–503 (ILDKIYAHRK…DTSAFVAQLL (265 aa)). The N-(5'-phosphoribosyl)anthranilate isomerase stretch occupies residues 519-752 (LVKICGTRTE…FVKSAKSIRQ (234 aa)).

It catalyses the reaction N-(5-phospho-beta-D-ribosyl)anthranilate = 1-(2-carboxyphenylamino)-1-deoxy-D-ribulose 5-phosphate. The catalysed reaction is 1-(2-carboxyphenylamino)-1-deoxy-D-ribulose 5-phosphate + H(+) = (1S,2R)-1-C-(indol-3-yl)glycerol 3-phosphate + CO2 + H2O. It carries out the reaction chorismate + L-glutamine = anthranilate + pyruvate + L-glutamate + H(+). It functions in the pathway amino-acid biosynthesis; L-tryptophan biosynthesis; L-tryptophan from chorismate: step 1/5. The protein operates within amino-acid biosynthesis; L-tryptophan biosynthesis; L-tryptophan from chorismate: step 3/5. It participates in amino-acid biosynthesis; L-tryptophan biosynthesis; L-tryptophan from chorismate: step 4/5. Its function is as follows. Trifunctional enzyme bearing the Gln amidotransferase (GATase) domain of anthranilate synthase, indole-glycerolphosphate synthase, and phosphoribosylanthranilate isomerase activities. This Penicillium chrysogenum (Penicillium notatum) protein is Multifunctional tryptophan biosynthesis protein (trpC).